Here is a 245-residue protein sequence, read N- to C-terminus: Polyhedrin (245 aa).

The protein belongs to the polyhedrin family.

Functionally, major component of the virus occlusion bodies, which are large proteinaceous structures (polyhedra), that protect the virus from the outside environment for extended periods until they are ingested by insect larvae. The polypeptide is Polyhedrin (Lepidoptera (butterflies and moths)).